Reading from the N-terminus, the 116-residue chain is Large ribosomal subunit protein bL20 (116 aa).

This sequence belongs to the bacterial ribosomal protein bL20 family.

Functionally, binds directly to 23S ribosomal RNA and is necessary for the in vitro assembly process of the 50S ribosomal subunit. It is not involved in the protein synthesizing functions of that subunit. This Synechococcus elongatus (strain ATCC 33912 / PCC 7942 / FACHB-805) (Anacystis nidulans R2) protein is Large ribosomal subunit protein bL20.